The chain runs to 731 residues: Catalase-peroxidase (731 aa).

The segment at residues 98-226 (WHAAGTYRTA…LAAVQMGLIY (129 aa)) is a cross-link (tryptophyl-tyrosyl-methioninium (Trp-Tyr) (with M-252)). The active-site Proton acceptor is histidine 99. Positions 226-252 (YVNPEGPDGNPDIVASGHDVIETFGRM) form a cross-link, tryptophyl-tyrosyl-methioninium (Tyr-Met) (with W-98). Histidine 267 contacts heme b.

This sequence belongs to the peroxidase family. Peroxidase/catalase subfamily. As to quaternary structure, homodimer or homotetramer. Requires heme b as cofactor. In terms of processing, formation of the three residue Trp-Tyr-Met cross-link is important for the catalase, but not the peroxidase activity of the enzyme.

The catalysed reaction is H2O2 + AH2 = A + 2 H2O. It carries out the reaction 2 H2O2 = O2 + 2 H2O. Bifunctional enzyme with both catalase and broad-spectrum peroxidase activity. The chain is Catalase-peroxidase from Ruegeria pomeroyi (strain ATCC 700808 / DSM 15171 / DSS-3) (Silicibacter pomeroyi).